Here is a 330-residue protein sequence, read N- to C-terminus: Aspartate--ammonia ligase (330 aa).

This sequence belongs to the class-II aminoacyl-tRNA synthetase family. AsnA subfamily.

It is found in the cytoplasm. It carries out the reaction L-aspartate + NH4(+) + ATP = L-asparagine + AMP + diphosphate + H(+). Its pathway is amino-acid biosynthesis; L-asparagine biosynthesis; L-asparagine from L-aspartate (ammonia route): step 1/1. The polypeptide is Aspartate--ammonia ligase (Serratia proteamaculans (strain 568)).